The sequence spans 182 residues: Peptidyl-prolyl cis-trans isomerase H (182 aa).

The PPIase cyclophilin-type domain occupies 15 to 181 (FFDITIGGEP…LDVVISQCGE (167 aa)).

Belongs to the cyclophilin-type PPIase family. PPIase H subfamily.

The protein localises to the nucleus. It carries out the reaction [protein]-peptidylproline (omega=180) = [protein]-peptidylproline (omega=0). In terms of biological role, PPIases accelerate the folding of proteins. It catalyzes the cis-trans isomerization of proline imidic peptide bonds in oligopeptides. The polypeptide is Peptidyl-prolyl cis-trans isomerase H (CYP3) (Gibberella zeae (strain ATCC MYA-4620 / CBS 123657 / FGSC 9075 / NRRL 31084 / PH-1) (Wheat head blight fungus)).